The sequence spans 703 residues: WPP domain-interacting tail-anchored protein 1 (703 aa).

Positions 1–12 are enriched in basic and acidic residues; it reads METETEHDRTVS. Disordered regions lie at residues 1–27 and 86–107; these read METE…SSTK and FVSK…DDDS. Over residues 92–107 the composition is skewed to acidic residues; the sequence is EDEEEPSSNVDDDDDS. Positions 118–183 form a coiled coil; sequence SSILNSEVKE…MEQVVEMKKQ (66 aa). The segment at 189-208 is disordered; that stretch reads RLSSGLDEQGSWSGGQTSVS. Positions 198–208 are enriched in polar residues; it reads GSWSGGQTSVS. 3 coiled-coil regions span residues 236 to 265, 318 to 461, and 500 to 604; these read LEKS…MKLY, KRED…RDKG, and STVS…SREN. The helical transmembrane segment at 679–699 threads the bilayer; the sequence is FKHILVAILVILISSIAYVIS.

Homodimer. Component of Ran complexes at least composed of WIT1 or WIT2, RANGAP1 or RANGAP2, and WIP1 or WIP2 or WIP3. Interacts with WIP2, WPP1/MAF1, WPP2/MAF2, RANGAP1 and RANGAP2. Component of a ternary complex composed of WPP1, HSP70-1 and WIT1. Interacts with KAKU1. Interacts with WIP1. As to expression, ubiquitous.

Its subcellular location is the nucleus envelope. It is found in the nucleus membrane. Functionally, together with WIT2, required for the nuclear envelope docking of RANGAP proteins in root tips. The sequence is that of WPP domain-interacting tail-anchored protein 1 (WIT1) from Arabidopsis thaliana (Mouse-ear cress).